The following is a 483-amino-acid chain: MGDVIVLYASPGMGHIVSMVELGKFIVHRYGPHKFSITILYTCGSIVDTASIPVYIRRISHSHPFISFRQFPRVTNNITRNISVPAITFDFIRQNDPHVRSALQEISKSATVRAFIIDLFCTSALPIGKEFNIPTYYFRTSGAAILAAFLYLPKIDEQTKTTESFKDLRDTVFEFPGWKSPLKATHMVQLVLDRNDPAYSDMIYFCSHLPKSNGIIVNTFEELEPPSVLQAIAGGLCVPDGPTPPVYYVGPLIEEEKELSKDADAAEKEDCLSWLDKQPSRSVLFLCFGSMGSFPAAQLKEIANGLEASGQRFLWVVKKPPVEEKSKQVHGVDDFDLKGVLPEGFLERTADRGMVVKSWAPQVVVLKKESVGGFVTHCGWNSVLEAVVAGVPMIAWPLYAEQHMNRNVLVTDMEIAIGVEQRDEEGGFVSGEEVERRVRELMESEGGRVLRERCKKLGEMASAALGETGSSTRNLVNFVSSIT.

Catalysis depends on His15, which acts as the Proton acceptor. His15 is a binding site for an anthocyanidin. Catalysis depends on Asp118, which acts as the Charge relay. UDP-alpha-D-glucose contacts are provided by Thr140, Ala360, Gln362, His377, Trp380, Asn381, Ser382, and Glu385. Residue Ala400 coordinates an anthocyanidin. 2 residues coordinate UDP-alpha-D-glucose: Glu401 and Gln402.

It belongs to the UDP-glycosyltransferase family.

The catalysed reaction is phloretin + UDP-alpha-D-glucose = phlorizin + UDP + H(+). Its function is as follows. Glycosyltransferase that possesses phloretin 2'-O-glycosyltransferase activity. Converts phloretin to phlorizin (phloretin 2'-O-glucoside), a potent antioxidant. Is specific for phloretin and does not possess glycosyltransferase activity toward caffeic acid, catechin, chlorogenic acid, 2-coumaric acid, 3-coumaric acid, 4-coumaric acid, cyanidin, 3,4-dihydroxyhydrocinnamic acid, epicatechin, 3-hydroxybenzoic acid, naringenin, 3,4-dihydroxybenzoic acid, quercetin and rutin. Can glycosylate phloretin in the presence of UDP-glucose, UDP-xylose and UDP-galactose. The chain is Phloretin 2'-O-glucosyltransferase from Malus domestica (Apple).